We begin with the raw amino-acid sequence, 870 residues long: Dynamin-2 (870 aa).

The Dynamin-type G domain occupies 28-294; the sequence is HLDLPQIAVV…LTNHIRESLP (267 aa). The segment at 38 to 45 is G1 motif; the sequence is GGQSAGKS. Positions 41, 43, 44, 45, 46, 59, and 60 each coordinate GDP. Residues 64–66 are G2 motif; that stretch reads VTR. Residues 136 to 139 form a G3 motif region; sequence DLPG. The G4 motif stretch occupies residues 205 to 208; sequence TKLD. GDP is bound by residues Lys-206, Asp-208, and Asp-211. Position 231 is a phosphotyrosine (Tyr-231). Residues 235-238 form a G5 motif region; the sequence is VNRS. 3 residues coordinate GDP: Asn-236, Arg-237, and Gln-239. Residue Lys-299 is modified to N6-acetyllysine. Residues 519–625 enclose the PH domain; the sequence is LVIRRGWLTI…WKASFLRAGV (107 aa). Tyr-597 carries the phosphotyrosine modification. Lys-598 is modified (N6-acetyllysine). Residues 653–744 enclose the GED domain; that stretch reads VETIRNLVDS…IIGDISTSTV (92 aa). The tract at residues 741–870 is disordered; that stretch reads TSTVSTPVPP…IRPAEPSLLD (130 aa). At Thr-755 the chain carries Phosphothreonine. The span at 756–767 shows a compositional bias: polar residues; sequence WLQNTSGHSPTP. A Phosphoserine; by CDK1 modification is found at Ser-764. Over residues 826-846 the composition is skewed to pro residues; it reads SAPPQIPSRPARIPPGIPPGV. The segment covering 847–864 has biased composition (low complexity); sequence PSRRAPAAPSRPTIIRPA.

It belongs to the TRAFAC class dynamin-like GTPase superfamily. Dynamin/Fzo/YdjA family. In terms of assembly, oligomerizes into a helical polymer that self-assembles around the vesicle membrane, when associated to the menbrane through lipid binding. Interacts with SHANK1 and SHANK2. Interacts with SNX9. Interacts (via C-terminal proline-rich domain (PRD)) with SNX18 (via SH3 domain); this interaction regulates ATG9A and ATG16L1 trafficking from recycling endosomes to sites of autophagosome formation. Interacts with SNX33 (via SH3 domain). Interacts with MYO1E (via SH3 domain). Interacts with PSTPIP1 (via SH3 domain). Interacts with CTNND2. Interacts (via C-terminal proline-rich domain (PRD)) with BIN1 (via SH3 domain); this interaction allows the recruitment of DNM2 to the membrane tubules and inhibits self-assembly-stimulated GTPase activity on the membrane. Interacts with GABARAP, GABARAPL1 and GABARAPL2. Interacts with MAP1LC3B (the lipidate and non-lipidated LC3 form); this interaction mediates recycling endosome scission leading to autophagosome release. Interacts with ITSN1. Interacts (via C-terminal proline-rich domain (PRD)) with SH3BP4 (via SH3 domain); this interaction controls the GTPase activity and is prevented by EGFR-induced tyrosine phosphorylation of either DNM2 or SH3BP4. Interacts with MYOF. May interact with PIK3C3. May be a component of a complex composed of RAB5A (in GDP-bound form), DYN2 and PIK3C3. Interacts with SDC4; this interaction is markedly enhanced at focal ahesion site upon induction of focal adhesions and stress-fiber formation. Interacts with ACTN1. Interacts with CTTN; this interaction stimulates the intrinsic GTPase activity of DNM2 and stabilizes the association of DNM2 and actin filaments; in addition this interaction is stimulated by ligand binding to the receptor, leading to the recruitment of the DNM2-CTTN complex to the sequestered receptor-ligand complex to its internalization. Interacts with NOSTRIN (via SH3 domain); this interaction allows the recruitment of NOS3 to dynamin-positive structures. Interacts with TUBG1; this interaction may participate in centrosome cohesion. In terms of processing, phosphorylation at Ser-848 by GSK3-alpha relieves the inhibition of BIN1 and promotes endocytosis. Phosphorylation at Ser-764 by CDK1 is greatly increased upon mitotic entry. It regulates cytokinesis downstream of calcineurin, and does not affect clathrin-mediated endocytosis. Dephosphorylated by calcineurin/PP2 during cytokinesis in a Ca(2+)- and calmodulin-dependent manner. Phosphorylated on tyrosine residues by EGFR. Phosphorylated on tyrosine residues after activation of SRC. In terms of tissue distribution, expressed in most tissues during embryonic development, including the peripheral nervous system although no expression is evident in skeletal muscle or heart.

It localises to the cytoplasm. Its subcellular location is the cytoskeleton. It is found in the cytoplasmic vesicle. The protein resides in the clathrin-coated vesicle. The protein localises to the cell projection. It localises to the uropodium. Its subcellular location is the endosome. It is found in the microtubule organizing center. The protein resides in the centrosome. The protein localises to the centriole. It localises to the recycling endosome. Its subcellular location is the phagocytic cup. It is found in the phagosome membrane. The protein resides in the podosome. The protein localises to the cell junction. It localises to the postsynaptic density. Its subcellular location is the synapse. It is found in the synaptosome. The protein resides in the midbody. The protein localises to the membrane. It localises to the clathrin-coated pit. The enzyme catalyses GTP + H2O = GDP + phosphate + H(+). Functionally, catalyzes the hydrolysis of GTP and utilizes this energy to mediate vesicle scission at plasma membrane during endocytosis and filament remodeling at many actin structures during organization of the actin cytoskeleton. Plays an important role in vesicular trafficking processes, namely clathrin-mediated endocytosis (CME), exocytic and clathrin-coated vesicle from the trans-Golgi network, and PDGF stimulated macropinocytosis. During vesicular trafficking process, associates to the membrane, through lipid binding, and self-assembles into ring-like structure through oligomerization to form a helical polymer around the vesicle membrane and leading to vesicle scission. Plays a role in organization of the actin cytoskeleton by mediating arrangement of stress fibers and actin bundles in podocytes. During organization of the actin cytoskeleton, self-assembles into ring-like structure that directly bundles actin filaments to form typical membrane tubules decorated with dynamin spiral polymers. Self-assembly increases GTPase activity and the GTP hydrolysis causes the rapid depolymerization of dynamin spiral polymers, and results in dispersion of actin bundles. Remodels, through its interaction with CTTN, bundled actin filaments in a GTPase-dependent manner and plays a role in orchestrating the global actomyosin cytoskeleton. The interaction with CTTN stabilizes the interaction of DNM2 and actin filaments and stimulates the intrinsic GTPase activity that results in actin filament-barbed ends and increases the sensitivity of filaments in bundles to the actin depolymerizing factor, CFL1. Plays a role in the autophagy process, by participating in the formation of ATG9A vesicles destined for the autophagosomes through its interaction with SNX18, by mediating recycling endosome scission leading to autophagosome release through MAP1LC3B interaction. Also regulates maturation of apoptotic cell corpse-containing phagosomes by recruiting PIK3C3 to the phagosome membrane. Also plays a role in cytokinesis. May participate in centrosome cohesion through its interaction with TUBG1. Plays a role in the regulation of neuron morphology, axon growth and formation of neuronal growth cones. Involved in membrane tubulation. The chain is Dynamin-2 from Mus musculus (Mouse).